The primary structure comprises 439 residues: Chitinase-like protein Idgf1 (439 aa).

Residues 1-20 (MRFQLCYLLGLLSVTSLSHA) form the signal peptide. The GH18 domain maps to 22–439 (SNLICYYDST…IVRSIKYFMG (418 aa)). C26 and C53 are oxidised to a cystine. N122, N218, and N346 each carry an N-linked (GlcNAc...) asparagine glycan. Cysteines 340 and 423 form a disulfide.

Belongs to the glycosyl hydrolase 18 family. IDGF subfamily. Glycosylated.

It is found in the secreted. Cooperates with insulin-like peptides to stimulate the proliferation, polarization and motility of imaginal disk cells. May act by stabilizing the binding of insulin-like peptides to its receptor through a simultaneous interaction with both molecules to form a multiprotein signaling complex. The chain is Chitinase-like protein Idgf1 (Idgf1) from Drosophila yakuba (Fruit fly).